A 447-amino-acid polypeptide reads, in one-letter code: Signal recognition particle protein (447 aa).

GTP is bound by residues 108 to 115 (GLQGSGKT), 190 to 194 (DTAGR), and 248 to 251 (TKLD).

This sequence belongs to the GTP-binding SRP family. SRP54 subfamily. As to quaternary structure, part of the signal recognition particle protein translocation system, which is composed of SRP and FtsY. Interacts with RNA.

The protein resides in the cytoplasm. The enzyme catalyses GTP + H2O = GDP + phosphate + H(+). Functionally, involved in targeting and insertion of nascent membrane proteins into the cytoplasmic membrane. Binds to the hydrophobic signal sequence of the ribosome-nascent chain (RNC) as it emerges from the ribosomes. The SRP-RNC complex is then targeted to the cytoplasmic membrane where it interacts with the SRP receptor FtsY. The sequence is that of Signal recognition particle protein from Mycoplasma mycoides.